A 357-amino-acid chain; its full sequence is MAEHWGDAIYAARRKGDETTREAMFTYTNSNNTKDPFEGPNYHIAPRWVYNVATVWMFFVVVASTFTNGLVLVATAKFKKLRHPLNWILVNLAIADLGETLFASTISVINQFFGYFILGHPMCIFEGYTVSVCGIAALWSLTVISWERWVVVCKPFGNVKFDAKWASAGIIFSWVWAAAWCAPPIFGWSRYWPHGLKTSCGPDVFSGSEDPGVQSYMVVLMITCCIIPLAIIILCYIAVYLAIHAVAQQQKDSESTQKAEKEVSRMVVVMIFAYCFCWGPYTFFACFAAANPGYAFHPLAAAMPAYFAKSATIYNPVIYVFMNRQFRVCIMQLFGKKVDDGSEVSTSKTEVSSVAPA.

The Extracellular portion of the chain corresponds to 1–49 (MAEHWGDAIYAARRKGDETTREAMFTYTNSNNTKDPFEGPNYHIAPRWV). The N-linked (GlcNAc...) asparagine glycan is linked to N31. The chain crosses the membrane as a helical span at residues 50-74 (YNVATVWMFFVVVASTFTNGLVLVA). Residues 75-86 (TAKFKKLRHPLN) are Cytoplasmic-facing. A helical membrane pass occupies residues 87–112 (WILVNLAIADLGETLFASTISVINQF). Topologically, residues 113–126 (FGYFILGHPMCIFE) are extracellular. A disulfide bond links C123 and C200. The helical transmembrane segment at 127 to 146 (GYTVSVCGIAALWSLTVISW) threads the bilayer. The Cytoplasmic segment spans residues 147 to 165 (ERWVVVCKPFGNVKFDAKW). The chain crosses the membrane as a helical span at residues 166–189 (ASAGIIFSWVWAAAWCAPPIFGWS). Over 190–215 (RYWPHGLKTSCGPDVFSGSEDPGVQS) the chain is Extracellular. A helical transmembrane segment spans residues 216 to 243 (YMVVLMITCCIIPLAIIILCYIAVYLAI). At 244 to 265 (HAVAQQQKDSESTQKAEKEVSR) the chain is on the cytoplasmic side. A helical transmembrane segment spans residues 266–289 (MVVVMIFAYCFCWGPYTFFACFAA). Residues 290–297 (ANPGYAFH) lie on the Extracellular side of the membrane. The chain crosses the membrane as a helical span at residues 298–322 (PLAAAMPAYFAKSATIYNPVIYVFM). An N6-(retinylidene)lysine modification is found at K309. At 323–357 (NRQFRVCIMQLFGKKVDDGSEVSTSKTEVSSVAPA) the chain is on the cytoplasmic side.

This sequence belongs to the G-protein coupled receptor 1 family. Opsin subfamily. Post-translationally, phosphorylated on some or all of the serine and threonine residues present in the C-terminal region. Retinal double cone principal photoreceptor cell outer segments.

The protein resides in the membrane. Visual pigments are the light-absorbing molecules that mediate vision. They consist of an apoprotein, opsin, covalently linked to cis-retinal. This chain is Red-sensitive opsin-1 (opn1lw1), found in Danio rerio (Zebrafish).